The primary structure comprises 260 residues: NAD-capped RNA hydrolase NudC (260 aa).

Arginine 69 contributes to the substrate binding site. Residues cysteine 98 and cysteine 101 each contribute to the Zn(2+) site. Residue glutamate 111 participates in substrate binding. Zn(2+) contacts are provided by cysteine 116 and cysteine 119. Substrate is bound at residue tyrosine 124. One can recognise a Nudix hydrolase domain in the interval 125-248 (PQIAPCIIVA…TVARRLIEDT (124 aa)). A divalent metal cation-binding residues include alanine 158, glutamate 174, and glutamate 178. The short motif at 159–180 (GFVEVGETLEQTVVREVMEESQ) is the Nudix box element. Position 192–199 (192–199 (QPWPFPHS)) interacts with substrate. Glutamate 219 is a binding site for a divalent metal cation. Alanine 241 contributes to the substrate binding site.

The protein belongs to the Nudix hydrolase family. NudC subfamily. Homodimer. The cofactor is Mg(2+). Mn(2+) is required as a cofactor. Requires Zn(2+) as cofactor.

It catalyses the reaction a 5'-end NAD(+)-phospho-ribonucleoside in mRNA + H2O = a 5'-end phospho-adenosine-phospho-ribonucleoside in mRNA + beta-nicotinamide D-ribonucleotide + 2 H(+). The enzyme catalyses NAD(+) + H2O = beta-nicotinamide D-ribonucleotide + AMP + 2 H(+). The catalysed reaction is NADH + H2O = reduced beta-nicotinamide D-ribonucleotide + AMP + 2 H(+). Functionally, mRNA decapping enzyme that specifically removes the nicotinamide adenine dinucleotide (NAD) cap from a subset of mRNAs by hydrolyzing the diphosphate linkage to produce nicotinamide mononucleotide (NMN) and 5' monophosphate mRNA. The NAD-cap is present at the 5'-end of some mRNAs and stabilizes RNA against 5'-processing. Has preference for mRNAs with a 5'-end purine. Catalyzes the hydrolysis of a broad range of dinucleotide pyrophosphates. The sequence is that of NAD-capped RNA hydrolase NudC from Pectobacterium carotovorum subsp. carotovorum (strain PC1).